Here is a 393-residue protein sequence, read N- to C-terminus: 8-amino-7-oxononanoate synthase (393 aa).

108–109 (GF) is a pyridoxal 5'-phosphate binding site. Position 133 (H133) interacts with substrate. Pyridoxal 5'-phosphate contacts are provided by residues S182, 207–210 (DDAH), and 238–241 (TLSK). At K241 the chain carries N6-(pyridoxal phosphate)lysine. A substrate-binding site is contributed by T355.

This sequence belongs to the class-II pyridoxal-phosphate-dependent aminotransferase family. BioF subfamily. Homodimer. The cofactor is pyridoxal 5'-phosphate.

The catalysed reaction is 6-carboxyhexanoyl-[ACP] + L-alanine + H(+) = (8S)-8-amino-7-oxononanoate + holo-[ACP] + CO2. Its pathway is cofactor biosynthesis; biotin biosynthesis. Its function is as follows. Catalyzes the decarboxylative condensation of pimeloyl-[acyl-carrier protein] and L-alanine to produce 8-amino-7-oxononanoate (AON), [acyl-carrier protein], and carbon dioxide. This chain is 8-amino-7-oxononanoate synthase, found in Petrotoga mobilis (strain DSM 10674 / SJ95).